A 45-amino-acid polypeptide reads, in one-letter code: Cytochrome b559 subunit beta (45 aa).

Residues W20 to A36 traverse the membrane as a helical segment. H24 contacts heme.

This sequence belongs to the PsbE/PsbF family. As to quaternary structure, heterodimer of an alpha subunit and a beta subunit. PSII is composed of 1 copy each of membrane proteins PsbA, PsbB, PsbC, PsbD, PsbE, PsbF, PsbH, PsbI, PsbJ, PsbK, PsbL, PsbM, PsbT, PsbX, PsbY, PsbZ, Psb30/Ycf12, peripheral proteins PsbO, CyanoQ (PsbQ), PsbU, PsbV and a large number of cofactors. It forms dimeric complexes. Heme b serves as cofactor.

The protein resides in the cellular thylakoid membrane. This b-type cytochrome is tightly associated with the reaction center of photosystem II (PSII). PSII is a light-driven water:plastoquinone oxidoreductase that uses light energy to abstract electrons from H(2)O, generating O(2) and a proton gradient subsequently used for ATP formation. It consists of a core antenna complex that captures photons, and an electron transfer chain that converts photonic excitation into a charge separation. The sequence is that of Cytochrome b559 subunit beta from Parasynechococcus marenigrum (strain WH8102).